The following is a 247-amino-acid chain: Triosephosphate isomerase (247 aa).

Residues asparagine 10 and lysine 12 each coordinate substrate. Histidine 94 (electrophile) is an active-site residue. Glutamate 164 functions as the Proton acceptor in the catalytic mechanism.

The protein belongs to the triosephosphate isomerase family. In terms of assembly, homodimer.

The protein resides in the cytoplasm. The enzyme catalyses D-glyceraldehyde 3-phosphate = dihydroxyacetone phosphate. It carries out the reaction dihydroxyacetone phosphate = methylglyoxal + phosphate. The protein operates within carbohydrate biosynthesis; gluconeogenesis. It participates in carbohydrate degradation; glycolysis; D-glyceraldehyde 3-phosphate from glycerone phosphate: step 1/1. Triosephosphate isomerase is an extremely efficient metabolic enzyme that catalyzes the interconversion between dihydroxyacetone phosphate (DHAP) and D-glyceraldehyde-3-phosphate (G3P) in glycolysis and gluconeogenesis. Functionally, it is also responsible for the non-negligible production of methylglyoxal a reactive cytotoxic side-product that modifies and can alter proteins, DNA and lipids. The chain is Triosephosphate isomerase from Latimeria chalumnae (Coelacanth).